The following is a 313-amino-acid chain: Pyrimidine-specific ribonucleoside hydrolase RihB (313 aa).

The Proton acceptor role is filled by aspartate 11. Residues aspartate 11, aspartate 16, and valine 124 each coordinate Ca(2+). Residues glutamine 227 and histidine 239 each contribute to the substrate site. Residue aspartate 240 participates in Ca(2+) binding.

Belongs to the IUNH family. RihB subfamily. Homotetramer. Ca(2+) is required as a cofactor.

The catalysed reaction is a pyrimidine ribonucleoside + H2O = a pyrimidine nucleobase + D-ribose. Hydrolyzes cytidine or uridine to ribose and cytosine or uracil, respectively. Has a clear preference for cytidine over uridine. Strictly specific for ribonucleosides. This Escherichia coli O1:K1 / APEC protein is Pyrimidine-specific ribonucleoside hydrolase RihB.